We begin with the raw amino-acid sequence, 289 residues long: Early E1A protein (289 aa).

Residues 41 to 49 (PTLHELYDL) are interaction with RB1 in competition with E2F1. An interaction with UBE2I region spans residues 76–140 (EGIDLLTFPP…PSDDEDEEGE (65 aa)). A disordered region spans residues 82–107 (TFPPAPGSPEPPHLSRQPEQPEQRAL). Residues 84 to 93 (PPAPGSPEPP) are compositionally biased toward pro residues. Ser-89 carries the phosphoserine; by host modification. The PXLXP motif, interaction with host ZMYND11 signature appears at 113–117 (PNLVP). The LXCXE motif, interaction with host RB1 and TMEM173/STING motif lies at 122–126 (LTCHE). The segment at 154–174 (CRSCHYHRRNTGDPDIMCSLC) is a zinc-finger region. The segment at 186 to 240 (PVSEPEPEPEPEPEPARPTRRPKMAPAILRRPTSPVSRECNSSTDSCDSGPSNTP) is disordered. Phosphoserine; by host occurs at positions 219 and 231. Positions 219-237 (SPVSRECNSSTDSCDSGPS) are enriched in polar residues. The short motif at 258 to 289 (RVGGRRQAVECIEDLLNEPGQPLDLSCKRPRP) is the Bipartite nuclear localization signal element. A PXDLS motif, CTBP-binding motif is present at residues 279 to 283 (PLDLS).

Belongs to the adenoviridae E1A protein family. Interacts with host UBE2I; this interaction interferes with polySUMOylation. Interacts with host RB1; this interaction induces the aberrant dissociation of RB1-E2F1 complex thereby disrupting the activity of RB1 and activating E2F1-regulated genes. Interacts with host ATF7; the interaction enhances ATF7-mediated viral transactivation activity which requires the zinc binding domains of both proteins. Isoform early E1A 32 kDa protein and isoform early E1A 26 kDa protein interact (via N-terminus) with CUL1 and E3 ubiquitin ligase RBX1; these interactions inhibit RBX1-CUL1-dependent elongation reaction of ubiquitin chains and attenuate ubiquitination of SCF(FBXW7) target proteins. Interacts (via PXLXP motif) with host ZMYND11/BS69 (via MYND-type zinc finger); this interaction inhibits E1A mediated transactivation. Interacts with host EP300; this interaction stimulates the acetylation of RB1 by recruiting EP300 and RB1 into a multimeric-protein complex. Interacts with host CTBP1 and CTBP2; this interaction seems to potentiate viral replication. Interacts with host DCAF7 (ref.16). Interacts with host DYRK1A. Interacts with host KPNA4; this interaction allows E1A import into the host nucleus. Interacts with host EP400; this interaction stabilizes MYC. Interacts with host TBP protein; this interaction probably disrupts the TBP-TATA complex. Interacts (via LXCXE motif) with host TMEM173/STING; this interaction impairs the ability of TMEM173/STING to sense cytosolic DNA and promote the production of type I interferon (IFN-alpha and IFN-beta). Interacts (via C-terminus) with host ZBED1/hDREF (via C-terminus); the interaction is direct.

The protein resides in the host nucleus. Its function is as follows. Plays a role in viral genome replication by driving entry of quiescent cells into the cell cycle. Stimulation of progression from G1 to S phase allows the virus to efficiently use the cellular DNA replicating machinery to achieve viral genome replication. E1A protein has both transforming and trans-activating activities. Induces the disassembly of the E2F1 transcription factor from RB1 by direct competition for the same binding site on RB1, with subsequent transcriptional activation of E2F1-regulated S-phase genes and of the E2 region of the adenoviral genome. Release of E2F1 leads to the ARF-mediated inhibition of MDM2 and causes TP53/p53 to accumulate because it is not targeted for degradation by MDM2-mediated ubiquitination anymore. This increase in TP53, in turn, would arrest the cell proliferation and direct its death but this effect is counteracted by the viral protein E1B-55K. Inactivation of the ability of RB1 to arrest the cell cycle is critical for cellular transformation, uncontrolled cellular growth and proliferation induced by viral infection. Interaction with RBX1 and CUL1 inhibits ubiquitination of the proteins targeted by SCF(FBXW7) ubiquitin ligase complex, and may be linked to unregulated host cell proliferation. The tumorigenesis-restraining activity of E1A may be related to the disruption of the host CtBP-CtIP complex through the CtBP binding motif. Interaction with host TMEM173/STING impairs the ability of TMEM173/STING to sense cytosolic DNA and promote the production of type I interferon (IFN-alpha and IFN-beta). Promotes the sumoylation of host ZBED1/hDREF with SUMO1. This chain is Early E1A protein, found in Homo sapiens (Human).